The chain runs to 56 residues: Large ribosomal subunit protein bL32 (56 aa).

Residues 1–37 are disordered; it reads MAVQQNKKSRSRRDMRRSHDALTTAAVSVDKTTGETH. The segment covering 7–16 has biased composition (basic residues); that stretch reads KKSRSRRDMR.

The protein belongs to the bacterial ribosomal protein bL32 family.

This is Large ribosomal subunit protein bL32 from Haemophilus ducreyi (strain 35000HP / ATCC 700724).